The following is a 208-amino-acid chain: Large ribosomal subunit protein uL3 (208 aa).

The tract at residues 116-148 (GFQGVIKRHGQSRGPMAHGSRYHRRPGSMGPVA) is disordered.

It belongs to the universal ribosomal protein uL3 family. In terms of assembly, part of the 50S ribosomal subunit. Forms a cluster with proteins L14 and L19.

Its function is as follows. One of the primary rRNA binding proteins, it binds directly near the 3'-end of the 23S rRNA, where it nucleates assembly of the 50S subunit. The sequence is that of Large ribosomal subunit protein uL3 from Streptococcus pyogenes serotype M12 (strain MGAS2096).